We begin with the raw amino-acid sequence, 243 residues long: Protein canopy homolog 3 (243 aa).

Residues 1 to 15 (MWFLFLLLPLWAGCA) form the signal peptide. One can recognise a Saposin B-type domain in the interval 27–236 (SKCEVCKYVA…KEEKKQMDQP (210 aa)). 3 disulfide bridges follow: cysteine 29/cysteine 188, cysteine 32/cysteine 176, and cysteine 86/cysteine 148. Residues 136 to 160 (ETSAEVADMKKQCDVMMENYEEVIE) adopt a coiled-coil conformation. The disordered stretch occupies residues 186 to 243 (QSCLSEQGDSRKGDTGPSTGTKKQKKQGEKKNKSKKQNSGSKEEKKQMDQPMAAKEEL). A compositionally biased stretch (basic and acidic residues) spans 226–243 (SKEEKKQMDQPMAAKEEL).

This sequence belongs to the canopy family.

It localises to the endoplasmic reticulum. Functionally, toll-like receptor (TLR)-specific co-chaperone for HSP90B1. Required for proper TLR folding and hence controls TLR exit from the endoplasmic reticulum. Consequently, required for immune responses. The protein is Protein canopy homolog 3 (cnpy3) of Xenopus laevis (African clawed frog).